Reading from the N-terminus, the 332-residue chain is Anthranilate phosphoribosyltransferase (332 aa).

5-phospho-alpha-D-ribose 1-diphosphate-binding positions include Gly-79, 82 to 83 (GD), Thr-87, 89 to 92 (NIST), 107 to 115 (KHGNRSVSS), and Ser-119. An anthranilate-binding site is contributed by Gly-79. A Mg(2+)-binding site is contributed by Ser-91. Asn-110 contacts anthranilate. Arg-165 lines the anthranilate pocket. 2 residues coordinate Mg(2+): Asp-223 and Glu-224.

The protein belongs to the anthranilate phosphoribosyltransferase family. In terms of assembly, homodimer. The cofactor is Mg(2+).

The enzyme catalyses N-(5-phospho-beta-D-ribosyl)anthranilate + diphosphate = 5-phospho-alpha-D-ribose 1-diphosphate + anthranilate. The protein operates within amino-acid biosynthesis; L-tryptophan biosynthesis; L-tryptophan from chorismate: step 2/5. In terms of biological role, catalyzes the transfer of the phosphoribosyl group of 5-phosphorylribose-1-pyrophosphate (PRPP) to anthranilate to yield N-(5'-phosphoribosyl)-anthranilate (PRA). This Vibrio parahaemolyticus serotype O3:K6 (strain RIMD 2210633) protein is Anthranilate phosphoribosyltransferase.